Here is a 1430-residue protein sequence, read N- to C-terminus: 3'-5' RNA helicase YTHDC2 (1430 aa).

A disordered region spans residues 1-37; sequence MSRPSSVSPRQPAPGGGGGGGPSPCGPGGGGRAKGLK. Residues 14–33 are compositionally biased toward gly residues; it reads PGGGGGGGPSPCGPGGGGRA. An R3H domain is found at 38–106; it reads DIRIDEEVKI…NRYLTVKKKD (69 aa). The 167-residue stretch at 203–369 folds into the Helicase ATP-binding domain; sequence VKIIKENKVV…FGSCPVIYIQ (167 aa). ATP is bound at residue 216–223; it reads GETGSGKT. A DEAH box motif is present at residues 316 to 319; that stretch reads DEVH. ANK repeat units follow at residues 506-538 and 539-571; these read TSATALMVAAGRGFASQVEQLISMGANVHSKAS and NGWMALDWAKHFGQTEIVDLLESYSASLEFGNL. The Helicase C-terminal domain occupies 612–784; that stretch reads LLYNICHSCD…ELCLHTKLLA (173 aa). Residues serine 1089, serine 1090, and serine 1092 each carry the phosphoserine modification. A compositionally biased stretch (polar residues) spans 1164–1174; the sequence is EQSAGLQQPSG. Residues 1164-1288 form a disordered region; the sequence is EQSAGLQQPS…SPSPRPNMPV (125 aa). The segment covering 1191–1200 has biased composition (low complexity); the sequence is SSWRSNNSRK. At serine 1202 the chain carries Phosphoserine. Over residues 1231 to 1249 the composition is skewed to basic and acidic residues; the sequence is KYKDRGILHPKRGTEDRSD. Residues 1250–1264 are compositionally biased toward low complexity; the sequence is QSSVKSTDSSSYPSP. Serine 1263, serine 1267, and serine 1281 each carry phosphoserine. One can recognise a YTH domain in the interval 1288 to 1418; sequence VRYFIMKSSN…QVGEQLLQLW (131 aa). RNA contacts are provided by residues 1294-1296, tryptophan 1310, and tryptophan 1360; that span reads KSS.

Belongs to the DEAD box helicase family. DEAH subfamily. In terms of assembly, interacts with MEIOC; binds transcripts that regulate the mitotic cell cycle inhibiting progression into metaphase, thereby allowing meiotic prophase to proceed normally. Interacts (via ANK repeats) with XRN1. Interacts with ZCCHC4. Associates with the small ribosomal subunit. Interacts with RBM46.

It localises to the cytoplasm. It is found in the perinuclear region. The enzyme catalyses ATP + H2O = ADP + phosphate + H(+). Functionally, 3'-5' RNA helicase that plays a key role in the male and female germline by promoting transition from mitotic to meiotic divisions in stem cells. Specifically recognizes and binds N6-methyladenosine (m6A)-containing RNAs, a modification present at internal sites of mRNAs and some non-coding RNAs that plays a role in the efficiency of RNA processing and stability. Essential for ensuring a successful progression of the meiotic program in the germline by regulating the level of m6A-containing RNAs. Acts by binding and promoting degradation of m6A-containing mRNAs: the 3'-5' RNA helicase activity is required for this process and RNA degradation may be mediated by XRN1 exoribonuclease. Required for both spermatogenesis and oogenesis. The chain is 3'-5' RNA helicase YTHDC2 from Pongo abelii (Sumatran orangutan).